The sequence spans 60 residues: Large ribosomal subunit protein bL32 (60 aa).

This sequence belongs to the bacterial ribosomal protein bL32 family.

This is Large ribosomal subunit protein bL32 from Paramagnetospirillum magneticum (strain ATCC 700264 / AMB-1) (Magnetospirillum magneticum).